We begin with the raw amino-acid sequence, 168 residues long: Large ribosomal subunit protein uL10 (168 aa).

The protein belongs to the universal ribosomal protein uL10 family. As to quaternary structure, part of the ribosomal stalk of the 50S ribosomal subunit. The N-terminus interacts with L11 and the large rRNA to form the base of the stalk. The C-terminus forms an elongated spine to which L12 dimers bind in a sequential fashion forming a multimeric L10(L12)X complex.

In terms of biological role, forms part of the ribosomal stalk, playing a central role in the interaction of the ribosome with GTP-bound translation factors. The polypeptide is Large ribosomal subunit protein uL10 (Ralstonia nicotianae (strain ATCC BAA-1114 / GMI1000) (Ralstonia solanacearum)).